Reading from the N-terminus, the 384-residue chain is GTPase Obg (384 aa).

In terms of domain architecture, Obg spans 1–159 (MKFVDEVEIR…RPLKLELMLL (159 aa)). A disordered region spans residues 72–94 (NGMGKNCTGRRGNDIVLPVPPGT). Positions 160 to 333 (ADVGLLGMPN…LCREVMSYLE (174 aa)) constitute an OBG-type G domain. Residues 166 to 173 (GMPNAGKS), 191 to 195 (FTTLI), 213 to 216 (DIPG), 283 to 286 (NKVD), and 314 to 316 (AAL) contribute to the GTP site. Mg(2+) contacts are provided by serine 173 and threonine 193. The segment at 358–384 (EEVLEEEMDDEDDDDDDDHDVEVIYQK) is disordered. Acidic residues predominate over residues 360-377 (VLEEEMDDEDDDDDDDHD).

The protein belongs to the TRAFAC class OBG-HflX-like GTPase superfamily. OBG GTPase family. Monomer. It depends on Mg(2+) as a cofactor.

It is found in the cytoplasm. Its function is as follows. An essential GTPase which binds GTP, GDP and possibly (p)ppGpp with moderate affinity, with high nucleotide exchange rates and a fairly low GTP hydrolysis rate. Plays a role in control of the cell cycle, stress response, ribosome biogenesis and in those bacteria that undergo differentiation, in morphogenesis control. The protein is GTPase Obg of Idiomarina loihiensis (strain ATCC BAA-735 / DSM 15497 / L2-TR).